A 184-amino-acid chain; its full sequence is MPAMEKLAGNFFLVGLMGAGKTTVGRALARRTGKTFYDSDQEIEARTGVRVATIFDIEGEMRFRNREACVIRDLAQQRDIVLATGGGAVLREENRKVLASHGTVIYLRASIDDLLARTQHDKNRPLLQIADPRAKLESLFNERDPFYREIADIIIDTTQQNVNLLVGRLVDQLLDSPHHPKETD.

An ATP-binding site is contributed by 18–23 (GAGKTT). Mg(2+) is bound at residue T22. Substrate is bound by residues D40, R64, and G86. R124 is an ATP binding site. R143 contributes to the substrate binding site. Residue Q160 coordinates ATP.

It belongs to the shikimate kinase family. In terms of assembly, monomer. The cofactor is Mg(2+).

It localises to the cytoplasm. The catalysed reaction is shikimate + ATP = 3-phosphoshikimate + ADP + H(+). It participates in metabolic intermediate biosynthesis; chorismate biosynthesis; chorismate from D-erythrose 4-phosphate and phosphoenolpyruvate: step 5/7. Catalyzes the specific phosphorylation of the 3-hydroxyl group of shikimic acid using ATP as a cosubstrate. This Chromobacterium violaceum (strain ATCC 12472 / DSM 30191 / JCM 1249 / CCUG 213 / NBRC 12614 / NCIMB 9131 / NCTC 9757 / MK) protein is Shikimate kinase.